The primary structure comprises 128 residues: Small ribosomal subunit protein uS14m (128 aa).

This sequence belongs to the universal ribosomal protein uS14 family. In terms of assembly, component of the mitochondrial ribosome small subunit (28S) which comprises a 12S rRNA and about 30 distinct proteins. Interacts with LIAT1.

The protein localises to the mitochondrion. The sequence is that of Small ribosomal subunit protein uS14m (MRPS14) from Bos taurus (Bovine).